The primary structure comprises 84 residues: Glutaredoxin (84 aa).

The 84-residue stretch at 1–84 folds into the Glutaredoxin domain; sequence MPPVVIYTTA…AGKLDALLSA (84 aa). C12 and C15 are disulfide-bonded.

It belongs to the glutaredoxin family. Monomer.

It localises to the cytoplasm. Functionally, has a glutathione-disulfide oxidoreductase activity in the presence of NADPH and glutathione reductase. Reduces low molecular weight disulfides and proteins. In Pseudomonas aeruginosa (strain ATCC 15692 / DSM 22644 / CIP 104116 / JCM 14847 / LMG 12228 / 1C / PRS 101 / PAO1), this protein is Glutaredoxin (grx).